A 205-amino-acid chain; its full sequence is Holliday junction branch migration complex subunit RuvA (205 aa).

Positions 1–64 are domain I; the sequence is MIGRLKGILV…EDAQLLYGFI (64 aa). Residues 65–143 are domain II; the sequence is HKEERSLFRL…SLMEASMGAE (79 aa). The flexible linker stretch occupies residues 144–156; it reads REFVLKSNFTPAP. Residues 157 to 205 are domain III; sequence VAATVEEDAIAALLSLGYKPQQASKAVSSAFQEGMDPEQLIKAALKSML.

This sequence belongs to the RuvA family. In terms of assembly, homotetramer. Forms an RuvA(8)-RuvB(12)-Holliday junction (HJ) complex. HJ DNA is sandwiched between 2 RuvA tetramers; dsDNA enters through RuvA and exits via RuvB. An RuvB hexamer assembles on each DNA strand where it exits the tetramer. Each RuvB hexamer is contacted by two RuvA subunits (via domain III) on 2 adjacent RuvB subunits; this complex drives branch migration. In the full resolvosome a probable DNA-RuvA(4)-RuvB(12)-RuvC(2) complex forms which resolves the HJ.

It localises to the cytoplasm. In terms of biological role, the RuvA-RuvB-RuvC complex processes Holliday junction (HJ) DNA during genetic recombination and DNA repair, while the RuvA-RuvB complex plays an important role in the rescue of blocked DNA replication forks via replication fork reversal (RFR). RuvA specifically binds to HJ cruciform DNA, conferring on it an open structure. The RuvB hexamer acts as an ATP-dependent pump, pulling dsDNA into and through the RuvAB complex. HJ branch migration allows RuvC to scan DNA until it finds its consensus sequence, where it cleaves and resolves the cruciform DNA. The chain is Holliday junction branch migration complex subunit RuvA from Shewanella amazonensis (strain ATCC BAA-1098 / SB2B).